The chain runs to 191 residues: dITP/XTP pyrophosphatase (191 aa).

Substrate is bound at residue 8–13 (SKNQGK). E38 and D67 together coordinate Mg(2+). D67 (proton acceptor) is an active-site residue. Residues S68, 146 to 149 (FGYD), K169, and 174 to 175 (HR) contribute to the substrate site.

This sequence belongs to the HAM1 NTPase family. Homodimer. Mg(2+) serves as cofactor.

The catalysed reaction is XTP + H2O = XMP + diphosphate + H(+). It catalyses the reaction dITP + H2O = dIMP + diphosphate + H(+). The enzyme catalyses ITP + H2O = IMP + diphosphate + H(+). In terms of biological role, pyrophosphatase that catalyzes the hydrolysis of nucleoside triphosphates to their monophosphate derivatives, with a high preference for the non-canonical purine nucleotides XTP (xanthosine triphosphate), dITP (deoxyinosine triphosphate) and ITP. Seems to function as a house-cleaning enzyme that removes non-canonical purine nucleotides from the nucleotide pool, thus preventing their incorporation into DNA/RNA and avoiding chromosomal lesions. The polypeptide is dITP/XTP pyrophosphatase (Prochlorococcus marinus subsp. pastoris (strain CCMP1986 / NIES-2087 / MED4)).